A 160-amino-acid chain; its full sequence is Large ribosomal subunit protein uL22c (160 aa).

It belongs to the universal ribosomal protein uL22 family. Part of the 50S ribosomal subunit.

It is found in the plastid. It localises to the chloroplast. In terms of biological role, this protein binds specifically to 23S rRNA. Its function is as follows. The globular domain of the protein is located near the polypeptide exit tunnel on the outside of the subunit, while an extended beta-hairpin is found that lines the wall of the exit tunnel in the center of the 70S ribosome. This Panax ginseng (Korean ginseng) protein is Large ribosomal subunit protein uL22c (rpl22).